A 313-amino-acid chain; its full sequence is Homoserine O-succinyltransferase (313 aa).

The Acyl-thioester intermediate role is filled by Cys-142. 2 residues coordinate substrate: Lys-163 and Ser-192. His-235 acts as the Proton acceptor in catalysis. The active site involves Glu-237. Substrate is bound at residue Arg-249.

The protein belongs to the MetA family.

The protein resides in the cytoplasm. It carries out the reaction L-homoserine + succinyl-CoA = O-succinyl-L-homoserine + CoA. It functions in the pathway amino-acid biosynthesis; L-methionine biosynthesis via de novo pathway; O-succinyl-L-homoserine from L-homoserine: step 1/1. Functionally, transfers a succinyl group from succinyl-CoA to L-homoserine, forming succinyl-L-homoserine. In Vibrio parahaemolyticus serotype O3:K6 (strain RIMD 2210633), this protein is Homoserine O-succinyltransferase.